A 177-amino-acid polypeptide reads, in one-letter code: Large ribosomal subunit protein uL6 (177 aa).

The protein belongs to the universal ribosomal protein uL6 family. Part of the 50S ribosomal subunit.

Its function is as follows. This protein binds to the 23S rRNA, and is important in its secondary structure. It is located near the subunit interface in the base of the L7/L12 stalk, and near the tRNA binding site of the peptidyltransferase center. This Rickettsia conorii (strain ATCC VR-613 / Malish 7) protein is Large ribosomal subunit protein uL6.